Here is a 64-residue protein sequence, read N- to C-terminus: uncharacterized protein (64 aa).

A run of 2 helical transmembrane segments spans residues 4–24 and 35–55; these read IYQY…WLAY and MYLN…TFGM.

The protein resides in the cell membrane. This is an uncharacterized protein from Bacillus subtilis (strain 168).